A 407-amino-acid chain; its full sequence is S-adenosylmethionine synthase (407 aa).

Position 19 (histidine 19) interacts with ATP. Aspartate 21 is a binding site for Mg(2+). Glutamate 47 contributes to the K(+) binding site. Glutamate 60 and glutamine 103 together coordinate L-methionine. Residues 103-113 (QSQEIADGVDT) form a flexible loop region. The disordered stretch occupies residues 108 to 131 (ADGVDTSQEARGDGHFEEDDRAGA). Residues 178 to 180 (DGK), aspartate 258, 264 to 265 (RK), alanine 281, and lysine 285 contribute to the ATP site. Aspartate 258 contributes to the L-methionine binding site. Lysine 289 provides a ligand contact to L-methionine.

It belongs to the AdoMet synthase family. In terms of assembly, homotetramer; dimer of dimers. Mg(2+) serves as cofactor. K(+) is required as a cofactor.

Its subcellular location is the cytoplasm. It catalyses the reaction L-methionine + ATP + H2O = S-adenosyl-L-methionine + phosphate + diphosphate. It functions in the pathway amino-acid biosynthesis; S-adenosyl-L-methionine biosynthesis; S-adenosyl-L-methionine from L-methionine: step 1/1. Catalyzes the formation of S-adenosylmethionine (AdoMet) from methionine and ATP. The overall synthetic reaction is composed of two sequential steps, AdoMet formation and the subsequent tripolyphosphate hydrolysis which occurs prior to release of AdoMet from the enzyme. This Corynebacterium efficiens (strain DSM 44549 / YS-314 / AJ 12310 / JCM 11189 / NBRC 100395) protein is S-adenosylmethionine synthase.